Reading from the N-terminus, the 248-residue chain is Triosephosphate isomerase (248 aa).

9–11 (NWK) provides a ligand contact to substrate. The Electrophile role is filled by histidine 93. Glutamate 163 functions as the Proton acceptor in the catalytic mechanism. Substrate contacts are provided by residues glycine 169, serine 208, and 229 to 230 (GG).

The protein belongs to the triosephosphate isomerase family. Homodimer.

It localises to the cytoplasm. It catalyses the reaction D-glyceraldehyde 3-phosphate = dihydroxyacetone phosphate. Its pathway is carbohydrate biosynthesis; gluconeogenesis. It participates in carbohydrate degradation; glycolysis; D-glyceraldehyde 3-phosphate from glycerone phosphate: step 1/1. In terms of biological role, involved in the gluconeogenesis. Catalyzes stereospecifically the conversion of dihydroxyacetone phosphate (DHAP) to D-glyceraldehyde-3-phosphate (G3P). In Jannaschia sp. (strain CCS1), this protein is Triosephosphate isomerase.